The primary structure comprises 316 residues: Cobalamin biosynthesis protein CobD (316 aa).

Transmembrane regions (helical) follow at residues 45-65 (FSPYLFGFFLWLTTVGLALGV), 78-100 (PVLYWLVWIYLAYASLAAKSLAF), 151-171 (DGVIGPLLCLFLGGPILAMTY), 209-229 (LTWLFLILSSQILLLDVKGAL), and 291-311 (ISLLYTSTMTGLILFTLFYLV).

Belongs to the CobD/CbiB family.

It localises to the cell membrane. It functions in the pathway cofactor biosynthesis; adenosylcobalamin biosynthesis. Its function is as follows. Converts cobyric acid to cobinamide by the addition of aminopropanol on the F carboxylic group. The sequence is that of Cobalamin biosynthesis protein CobD from Streptococcus sanguinis (strain SK36).